Here is a 169-residue protein sequence, read N- to C-terminus: Translocator protein (169 aa).

Over 2–5 (APPW) the chain is Mitochondrial intermembrane. A helical transmembrane segment spans residues 6-26 (VPAMGFTLAPSLGCFVGSRFV). Residues 27–46 (HGEGLRWYAGLQKPSWHPPH) lie on the Cytoplasmic side of the membrane. The chain crosses the membrane as a helical span at residues 47 to 67 (WVLGPVWGTLYSAMGYGSYLV). Residues 68-79 (WKELGGFTEKAV) lie on the Mitochondrial intermembrane side of the membrane. Residues 80–100 (VPLGLYTGQLALNWAWPPIFF) form a helical membrane-spanning segment. Over 101 to 105 (GARQM) the chain is Cytoplasmic. The helical transmembrane segment at 106–126 (GWALVDLLLVSGAAAATTVAW) threads the bilayer. Residues 127–134 (YQVSPLAA) lie on the Mitochondrial intermembrane side of the membrane. A helical membrane pass occupies residues 135-155 (RLLYPYLAWLAFTTTLNYCVW). The Cytoplasmic segment spans residues 156–169 (RDNHGWRGGRRLPE).

Belongs to the TspO/BZRP family. Interacts with TSPOAP1. May interact with STAR. Interacts with MOST-1. Interacts with TMEM97. Forms a complex with TMEM97 and PGRMC1; the interaction occurs in MIA PaCa-2 cells but not in MCF7 cells. As to expression, found in many tissue types. Expressed at the highest levels under normal conditions in tissues that synthesize steroids.

Its subcellular location is the mitochondrion membrane. Functionally, can bind protoporphyrin IX and may play a role in the transport of porphyrins and heme. Promotes the transport of cholesterol across mitochondrial membranes and may play a role in lipid metabolism, but its precise physiological role is controversial. It is apparently not required for steroid hormone biosynthesis. Was initially identified as peripheral-type benzodiazepine receptor; can also bind isoquinoline carboxamides. The chain is Translocator protein (TSPO) from Homo sapiens (Human).